We begin with the raw amino-acid sequence, 643 residues long: UPF0313 protein CLD_0573 (643 aa).

Residues 295 to 566 enclose the Radical SAM core domain; that stretch reads AIKEVKFSIT…RMQRALLQFS (272 aa). [4Fe-4S] cluster-binding residues include Cys-309, Cys-313, and Cys-316. The disordered stretch occupies residues 598 to 643; the sequence is NKPYKKSHKKNNAKNNNNHYNKNNNKNKDISKKNKKNSLSKHKKRK. The span at 600–609 shows a compositional bias: basic residues; that stretch reads PYKKSHKKNN. The segment covering 610-621 has biased composition (low complexity); the sequence is AKNNNNHYNKNN. Positions 630–643 are enriched in basic residues; it reads KNKKNSLSKHKKRK.

This sequence belongs to the UPF0313 family. Requires [4Fe-4S] cluster as cofactor.

This chain is UPF0313 protein CLD_0573, found in Clostridium botulinum (strain Okra / Type B1).